We begin with the raw amino-acid sequence, 416 residues long: MQLLPFLLYRLRHGSIVLQIMFGLVAGMALALLSPEAAKSVAFLGTLFVKALKGVAPVLVFVLVATSIAGKTKGVQTNMRPVLVLYLVGTFLAALVGVVASFLSPVRLVLANAATGSVPPGGIGEVLHTLLFQVVDNPVNALATGNFIGILAWAAALGVALHHSSDTTKAMLYDLSQSISNVVKVIIRFAPIGVFGLVADAIATTGFSALMGYSHLLAVLLGSMLFIALVVNPLIVFLAIRRNPYPLVWTCLRESGVTAFFTRSSAANIPVNMNLCRKLGLHEDTYSVSIPLGATINMAGAAITISVLSLAAVHTLGVEVDLPTALLLSLVASVAACGASGVAGGSLLLIPLACSLFGISNDVAMQMVAVGFIIGVIQDSAETALNSSTDVLFTAAACIANGDVDVPAGELVKTDA.

The next 9 membrane-spanning stretches (helical) occupy residues 14 to 34 (GSIV…ALLS), 43 to 63 (FLGT…VFVL), 82 to 102 (VLVL…VASF), 141 to 161 (ALAT…GVAL), 192 to 212 (IGVF…ALMG), 220 to 240 (LLGS…FLAI), 298 to 318 (MAGA…TLGV), 339 to 359 (ASGV…LFGI), and 363 to 383 (VAMQ…SAET).

Belongs to the dicarboxylate/amino acid:cation symporter (DAACS) (TC 2.A.23) family.

The protein localises to the cell inner membrane. The catalysed reaction is L-serine(in) + Na(+)(in) = L-serine(out) + Na(+)(out). It carries out the reaction L-threonine(in) + Na(+)(in) = L-threonine(out) + Na(+)(out). Functionally, involved in the import of serine and threonine into the cell, with the concomitant import of sodium (symport system). The polypeptide is Serine/threonine transporter SstT (Laribacter hongkongensis (strain HLHK9)).